A 354-amino-acid chain; its full sequence is WASH complex subunit 3 (354 aa).

A disordered region spans residues 76–354 (SSANVPVHNT…DDDDDDDESW (279 aa)). A compositionally biased stretch (pro residues) spans 107-143 (IPPPPPPPPPPMTGVPPPPPPPPPPPISKSNIPPPPA). Residues 150-159 (ESDDDDEDNN) show a composition bias toward acidic residues. A compositionally biased stretch (pro residues) spans 213-244 (PQPPQPQPQSPSPQPPPPPTTTSSIPVPPPPF). Positions 251-260 (SDDDDDDDEG) are enriched in acidic residues. Low complexity predominate over residues 277–290 (NNNSNSNSYSNNNN). Acidic residues-rich tracts occupy residues 293–307 (DDDD…DDDN) and 342–354 (DADD…DESW).

Belongs to the CCDC53 family. In terms of assembly, probable component of the WASH complex.

This is WASH complex subunit 3 from Dictyostelium discoideum (Social amoeba).